A 319-amino-acid chain; its full sequence is Cytochrome f (319 aa).

An N-terminal signal peptide occupies residues 1-35 (METRNIFSWIKEQITRSISVSLMIYIITRTAVSNA). The heme site is built by Tyr-36, Cys-56, Cys-59, and His-60. The helical transmembrane segment at 285 to 305 (VQGLLFFLASVILAQIFLVLK) threads the bilayer.

Belongs to the cytochrome f family. In terms of assembly, the 4 large subunits of the cytochrome b6-f complex are cytochrome b6, subunit IV (17 kDa polypeptide, petD), cytochrome f and the Rieske protein, while the 4 small subunits are PetG, PetL, PetM and PetN. The complex functions as a dimer. Heme serves as cofactor.

It localises to the plastid. It is found in the chloroplast thylakoid membrane. Its function is as follows. Component of the cytochrome b6-f complex, which mediates electron transfer between photosystem II (PSII) and photosystem I (PSI), cyclic electron flow around PSI, and state transitions. This is Cytochrome f from Coffea arabica (Arabian coffee).